Reading from the N-terminus, the 187-residue chain is Large ribosomal subunit protein uL5 (187 aa).

It belongs to the universal ribosomal protein uL5 family. Part of the 50S ribosomal subunit; part of the 5S rRNA/L5/L18/L25 subcomplex. Contacts the 5S rRNA and the P site tRNA. Forms a bridge to the 30S subunit in the 70S ribosome.

Its function is as follows. This is one of the proteins that bind and probably mediate the attachment of the 5S RNA into the large ribosomal subunit, where it forms part of the central protuberance. In the 70S ribosome it contacts protein S13 of the 30S subunit (bridge B1b), connecting the 2 subunits; this bridge is implicated in subunit movement. Contacts the P site tRNA; the 5S rRNA and some of its associated proteins might help stabilize positioning of ribosome-bound tRNAs. In Dinoroseobacter shibae (strain DSM 16493 / NCIMB 14021 / DFL 12), this protein is Large ribosomal subunit protein uL5.